Consider the following 342-residue polypeptide: 6-hydroxytryprostatin B O-methyltransferase (342 aa).

D201 is an S-adenosyl-L-methionine binding site. H244 acts as the Proton acceptor in catalysis.

It belongs to the class I-like SAM-binding methyltransferase superfamily. Cation-independent O-methyltransferase family. In terms of assembly, homodimer.

The catalysed reaction is 6-hydroxytryprostatin B + S-adenosyl-L-methionine = tryprostatin A + S-adenosyl-L-homocysteine + H(+). Its pathway is mycotoxin biosynthesis. Functionally, 6-hydroxytryprostatin B O-methyltransferase; part of the gene cluster that mediates the biosynthesis of fumitremorgins, indole alkaloids that carry not only intriguing chemical structures, but also interesting biological and pharmacological activities. The biosynthesis of fumitremorgin-type alkaloids begins by condensation of the two amino acids L-tryptophan and L-proline to brevianamide F, catalyzed by the non-ribosomal peptide synthetase ftmA. Brevianamide F is then prenylated by the prenyltransferase ftmPT1/ftmB in the presence of dimethylallyl diphosphate, resulting in the formation of tryprostatin B. The three cytochrome P450 monooxygenases, ftmP450-1/ftmC, ftmP450-2/ftmE and ftmP450-3/FtmG, are responsible for the conversion of tryprostatin B to 6-hydroxytryprostatin B, tryprostatin A to fumitremorgin C and fumitremorgin C to 12,13-dihydroxyfumitremorgin C, respectively. The putative methyltransferase ftmMT/ftmD is expected for the conversion of 6-hydroxytryprostatin B to tryprostatin A. FtmPT2/FtmH catalyzes the prenylation of 12,13-dihydroxyfumitre-morgin C in the presence of dimethylallyl diphosphate, resulting in the formation of fumitremorgin B. Fumitremorgin B is further converted to verruculogen by ftmOx1/ftmF via the insertion of an endoperoxide bond between the two prenyl moieties. In some fungal species, verruculogen is further converted to fumitremorgin A, but the enzymes involved in this step have not been identified yet. This Aspergillus fumigatus (strain ATCC MYA-4609 / CBS 101355 / FGSC A1100 / Af293) (Neosartorya fumigata) protein is 6-hydroxytryprostatin B O-methyltransferase.